The chain runs to 296 residues: ATP synthase gamma chain (296 aa).

Belongs to the ATPase gamma chain family. F-type ATPases have 2 components, CF(1) - the catalytic core - and CF(0) - the membrane proton channel. CF(1) has five subunits: alpha(3), beta(3), gamma(1), delta(1), epsilon(1). CF(0) has three main subunits: a, b and c.

It is found in the cell inner membrane. In terms of biological role, produces ATP from ADP in the presence of a proton gradient across the membrane. The gamma chain is believed to be important in regulating ATPase activity and the flow of protons through the CF(0) complex. This chain is ATP synthase gamma chain, found in Methylorubrum extorquens (strain CM4 / NCIMB 13688) (Methylobacterium extorquens).